The sequence spans 387 residues: Exodeoxyribonuclease 7 large subunit (387 aa).

The protein belongs to the XseA family. Heterooligomer composed of large and small subunits.

The protein localises to the cytoplasm. It catalyses the reaction Exonucleolytic cleavage in either 5'- to 3'- or 3'- to 5'-direction to yield nucleoside 5'-phosphates.. In terms of biological role, bidirectionally degrades single-stranded DNA into large acid-insoluble oligonucleotides, which are then degraded further into small acid-soluble oligonucleotides. This chain is Exodeoxyribonuclease 7 large subunit, found in Campylobacter jejuni (strain RM1221).